The chain runs to 564 residues: Homeobox protein unc-62 (564 aa).

Disordered regions lie at residues 40–59, 216–270, 293–313, 328–397, and 455–503; these read NEQFNDGYGPPPGSASADPA, ERAS…VMGG, SSSSNQAGDHPLANGGTLHST, PSTC…KVPK, and IDQN…PSSL. In terms of domain architecture, MEIS N-terminal spans 133-218; sequence SSDVCSSASF…PLDIVGDERA (86 aa). Residues 219–230 are compositionally biased toward low complexity; it reads SSSQPPMSPGSM. 2 stretches are compositionally biased toward polar residues: residues 328–344 and 381–390; these read PSTCSSGGLRQDSTPLS and LSDSANGSQN. Positions 392–454 form a DNA-binding region, homeobox; TALE-type; the sequence is KRKVPKVFSK…NARRRIVQPM (63 aa). Polar residues-rich tracts occupy residues 455 to 469 and 494 to 503; these read IDQNNRAGRSGQMNV and ANYSPDPSSL.

The protein belongs to the TALE/MEIS homeobox family. In terms of assembly, forms a heterodimer with homeobox ceh-60.

Its subcellular location is the nucleus. Functionally, acts redundantly with ceh-20 and ceh-40 to perform overlapping roles during embryogenesis. Required for postembryonic development of the ectoderm, including the Q, V and P cell lineages, playing a crucial role in ensuring that these cells and their descendants undergo their invariant patterns of cell division, migration, fusion and morphogenesis. Has a role in the mig-13 pathway to promote anterior migration of neuroblasts in the Q lineage. Required for multiple roles in regulating vulva development. Associates with homeobox ceh-60 to regulate gene expression, including repression of genes involved in innate immunity and activation of genes involved in vitellogenesis. Involved in lipid homeostasis, contributing to the formation of the cuticle. This chain is Homeobox protein unc-62 (unc-62), found in Caenorhabditis elegans.